A 130-amino-acid polypeptide reads, in one-letter code: Small ribosomal subunit protein uS11 (130 aa).

This sequence belongs to the universal ribosomal protein uS11 family. Part of the 30S ribosomal subunit. Interacts with proteins S7 and S18. Binds to IF-3.

In terms of biological role, located on the platform of the 30S subunit, it bridges several disparate RNA helices of the 16S rRNA. Forms part of the Shine-Dalgarno cleft in the 70S ribosome. The polypeptide is Small ribosomal subunit protein uS11 (Xanthomonas oryzae pv. oryzae (strain MAFF 311018)).